A 119-amino-acid chain; its full sequence is Large ribosomal subunit protein uL18 (119 aa).

The protein belongs to the universal ribosomal protein uL18 family. In terms of assembly, part of the 50S ribosomal subunit; part of the 5S rRNA/L5/L18/L25 subcomplex. Contacts the 5S and 23S rRNAs.

Functionally, this is one of the proteins that bind and probably mediate the attachment of the 5S RNA into the large ribosomal subunit, where it forms part of the central protuberance. In Helicobacter pylori (strain HPAG1), this protein is Large ribosomal subunit protein uL18.